Consider the following 225-residue polypeptide: Membrane protein (225 aa).

Residues 1 to 20 lie on the Virion surface side of the membrane; it reads MSNETNCTLDFEQSVELFKE. A helical membrane pass occupies residues 21-41; sequence YNLFITAFLLFLTIILQYGYA. Over 42–51 the chain is Intravirion; sequence TRSKFIYILK. Residues 52 to 72 form a helical membrane-spanning segment; it reads MIVLWCFWPLNIAVGVISCIY. Residues 73-77 are Virion surface-facing; sequence PPNTG. The helical transmembrane segment at 78-98 threads the bilayer; the sequence is GLVAAIILTVFACLSFVGYWI. Over 99–225 the chain is Intravirion; sequence QSIRLFKRCR…VATGGSSLYT (127 aa).

Belongs to the gammacoronaviruses M protein family. Homomultimer. Interacts with envelope E protein in the budding compartment of the host cell, which is located between endoplasmic reticulum and the Golgi complex. Forms a complex with HE and S proteins. Interacts with nucleocapsid N protein. This interaction probably participates in RNA packaging into the virus.

The protein resides in the virion membrane. It is found in the host Golgi apparatus membrane. Its function is as follows. Component of the viral envelope that plays a central role in virus morphogenesis and assembly via its interactions with other viral proteins. This chain is Membrane protein, found in Gallus gallus (Chicken).